A 415-amino-acid chain; its full sequence is Vascular endothelial growth factor C (415 aa).

The first 31 residues, 1–31 (MHLLCFLSLACSLLAAALIPGPREAPATVAA), serve as a signal peptide directing secretion. Residues 32-107 (FESGLGFSEA…RTGDTVKLAA (76 aa)) constitute a propeptide that is removed on maturation. 3 disulfides stabilise this stretch: cysteine 127–cysteine 169, cysteine 158–cysteine 205, and cysteine 162–cysteine 207. Residues asparagine 171, asparagine 201, and asparagine 236 are each glycosylated (N-linked (GlcNAc...) asparagine). Residues 224–415 (SLPATLPQCQ…PSYWKRPHLN (192 aa)) constitute a propeptide that is removed on maturation. Repeat copies occupy residues 276–291 (CGPN…QCVC), 300–315 (CGPH…QCVC), 324–339 (CGAN…QCVC), and 343–358 (CPRN…ACEC). Residues 276–358 (CGPNKELDED…LNPGKCACEC (83 aa)) are 4 X 16 AA repeats of C-X(10)-C-X-C-X(1,3)-C.

It belongs to the PDGF/VEGF growth factor family. Homodimer; non-covalent and antiparallel. Interacts with FLT4/VEGFR3; the interaction is required for FLT4/VEGFR3 homodimarization and activation. In terms of processing, undergoes a complex proteolytic maturation which generates a variety of processed secreted forms with increased activity toward VEGFR-3, but only the fully processed form could activate VEGFR-2. VEGF-C first form an antiparallel homodimer linked by disulfide bonds. Before secretion, a cleavage occurs between Arg-223 and Ser-224 producing a heterotetramer. The next extracellular step of the processing removes the N-terminal propeptide. Finally the mature VEGF-C is composed mostly of two VEGF homology domains (VHDs) bound by non-covalent interactions. Highly expressed in the lung, ovary, preputial gland and the adrenal gland. Expressed in the post-pubertal mammary glands.

It is found in the secreted. Its function is as follows. Growth factor active in angiogenesis, and endothelial cell growth, stimulating their proliferation and migration and also has effects on the permeability of blood vessels. May function in angiogenesis of the venous and lymphatic vascular systems during embryogenesis, and also in the maintenance of differentiated lymphatic endothelium in adults. Binds and activates KDR/VEGFR2 and FLT4/VEGFR3 receptors. The sequence is that of Vascular endothelial growth factor C (Vegfc) from Rattus norvegicus (Rat).